Here is a 118-residue protein sequence, read N- to C-terminus: UPF0344 protein RBAM_010920 (118 aa).

The next 4 membrane-spanning stretches (helical) occupy residues 4-24 (WHITSWVVALILVFVSYGLYG), 33-53 (ITHMILRLFYIIIILTGAELF), 62-82 (EYAGKMLLGIITIGLMEMLVI), and 93-113 (LWIGFIIVLVLTVLLGLHLPI).

Belongs to the UPF0344 family.

It is found in the cell membrane. This is UPF0344 protein RBAM_010920 from Bacillus velezensis (strain DSM 23117 / BGSC 10A6 / LMG 26770 / FZB42) (Bacillus amyloliquefaciens subsp. plantarum).